The chain runs to 139 residues: Nucleoside diphosphate kinase (139 aa).

ATP-binding residues include Lys9, Phe57, Arg85, Thr91, Arg102, and Asn112. His115 serves as the catalytic Pros-phosphohistidine intermediate.

It belongs to the NDK family. Homotetramer. Requires Mg(2+) as cofactor.

It localises to the cytoplasm. The catalysed reaction is a 2'-deoxyribonucleoside 5'-diphosphate + ATP = a 2'-deoxyribonucleoside 5'-triphosphate + ADP. The enzyme catalyses a ribonucleoside 5'-diphosphate + ATP = a ribonucleoside 5'-triphosphate + ADP. Functionally, major role in the synthesis of nucleoside triphosphates other than ATP. The ATP gamma phosphate is transferred to the NDP beta phosphate via a ping-pong mechanism, using a phosphorylated active-site intermediate. This Neorickettsia sennetsu (strain ATCC VR-367 / Miyayama) (Ehrlichia sennetsu) protein is Nucleoside diphosphate kinase.